The following is a 299-amino-acid chain: GTPase Era (299 aa).

In terms of domain architecture, Era-type G spans 5 to 172 (RSGFISIIGR…KDLIFAKLPE (168 aa)). A G1 region spans residues 13-20 (GRPNVGKS). Position 13–20 (13–20 (GRPNVGKS)) interacts with GTP. The segment at 39-43 (QTTRN) is G2. Residues 60 to 63 (DTPG) are G3. Residues 60-64 (DTPGI) and 122-125 (NKMD) each bind GTP. Positions 122–125 (NKMD) are G4. The G5 stretch occupies residues 151–153 (VSA). The KH type-2 domain maps to 203 to 280 (TREEIPHSVA…YLELWVKVKK (78 aa)).

This sequence belongs to the TRAFAC class TrmE-Era-EngA-EngB-Septin-like GTPase superfamily. Era GTPase family. In terms of assembly, monomer.

It is found in the cytoplasm. The protein resides in the cell membrane. In terms of biological role, an essential GTPase that binds both GDP and GTP, with rapid nucleotide exchange. Plays a role in 16S rRNA processing and 30S ribosomal subunit biogenesis and possibly also in cell cycle regulation and energy metabolism. The chain is GTPase Era from Heliobacterium modesticaldum (strain ATCC 51547 / Ice1).